The chain runs to 158 residues: Small ribosomal subunit protein uS15 (158 aa).

A compositionally biased stretch (basic residues) spans 1–18 (MARMHARKRGKSGSKRPP). The interval 1–21 (MARMHARKRGKSGSKRPPRTA) is disordered.

Belongs to the universal ribosomal protein uS15 family. In terms of assembly, part of the 30S ribosomal subunit.

The protein is Small ribosomal subunit protein uS15 of Pyrococcus furiosus (strain ATCC 43587 / DSM 3638 / JCM 8422 / Vc1).